Consider the following 271-residue polypeptide: Large ribosomal subunit protein uL2 (271 aa).

Positions 221 to 271 (RGVAMNPVDHPMGGGEGKSSGGHPRNRNGIPSNGFKTRNKKKITNKYIIKK) are disordered. Positions 257-271 (TRNKKKITNKYIIKK) are enriched in basic residues.

Belongs to the universal ribosomal protein uL2 family. As to quaternary structure, part of the 50S ribosomal subunit. Forms a bridge to the 30S subunit in the 70S ribosome.

In terms of biological role, one of the primary rRNA binding proteins. Required for association of the 30S and 50S subunits to form the 70S ribosome, for tRNA binding and peptide bond formation. It has been suggested to have peptidyltransferase activity; this is somewhat controversial. Makes several contacts with the 16S rRNA in the 70S ribosome. The sequence is that of Large ribosomal subunit protein uL2 from Karelsulcia muelleri (strain GWSS) (Sulcia muelleri).